A 60-amino-acid polypeptide reads, in one-letter code: Ferredoxin (60 aa).

2 4Fe-4S ferredoxin-type domains span residues 2-29 (KVRVDADACIGCGVCENLCPDVFQLGDD) and 30-60 (GKAKVLQPETDLPCAKDAADSCPTGAISVEE). 3 residues coordinate [4Fe-4S] cluster: C10, C13, and C16. C20 and C43 are disulfide-bonded. C51 is a binding site for [4Fe-4S] cluster.

In terms of assembly, monomer. It depends on [4Fe-4S] cluster as a cofactor.

Ferredoxins are iron-sulfur proteins that transfer electrons in a wide variety of metabolic reactions. The protein is Ferredoxin (fdx) of Thermotoga maritima (strain ATCC 43589 / DSM 3109 / JCM 10099 / NBRC 100826 / MSB8).